Consider the following 559-residue polypeptide: MAPRSQSKSQREPLRKRSREDADNSNDTNEDAAIQEVDADFEEVAGLLGTDIADPDQKQKQKQSKDEKRLQELTKPKVSNTSEAEADEPGVNYSFEKADFSEPTMKAIKEMGFQKMTKVQAKTIPPLLAGRDVLGAAKTGSGKTLAFLLPAVELLYSLKIKPRNGTAVIIITPTRELALQIFGVARQLMEYHSQTCGIVIGGADRRQEATKLAKGVNLLVATPGRLLDHLKNTQGFVFLNLKALVIDEADRILEIGFEEEMKQIIKILPNEDRQTMLFSATQTTKVEDLARISLRPGPLYINVVPEKDVSTADGLEQGYVVCDSDKRFLLLFSFLKRNIKKKIIVFLSSCNSVKFYSELLNYIDLPVLDLHGKQKQQKRTNTFFEFCNAKQGILVCTDVAARGLDIPAVDWIIQFDPPDDPRDYIHRVGRTARGTDGKGKSLMFLTPSELGFLRYLKAANVPLNEYEFPANKIANVQSQLTKLIKTNYLLHQSAKDGYRAYLQAYSSHSLKTVYQIDKLDLVKVGKSFGFDVPPKVNITIGASGKSIEKKHKKQKRDRK.

Residues 1 to 90 (MAPRSQSKSQ…TSEAEADEPG (90 aa)) form a disordered region. 2 stretches are compositionally biased toward basic and acidic residues: residues 9–22 (SQREPLRKRSREDA) and 55–75 (PDQKQKQKQSKDEKRLQELTK). The short motif at 93–121 (YSFEKADFSEPTMKAIKEMGFQKMTKVQA) is the Q motif element. Positions 124–300 (IPPLLAGRDV…RISLRPGPLY (177 aa)) constitute a Helicase ATP-binding domain. Position 137 to 144 (137 to 144 (AKTGSGKT)) interacts with ATP. A DEAD box motif is present at residues 247-250 (DEAD). One can recognise a Helicase C-terminal domain in the interval 314 to 484 (GLEQGYVVCD…NVQSQLTKLI (171 aa)).

It belongs to the DEAD box helicase family. DDX18/HAS1 subfamily. As to quaternary structure, associates in the nucleolus with the 60S and pre-60S ribosomal subunits.

It is found in the nucleus. Its subcellular location is the nucleolus. It carries out the reaction ATP + H2O = ADP + phosphate + H(+). Its function is as follows. ATP-dependent RNA helicase involved in 40S ribosomal subunit biogenesis. Required for the processing and cleavage of 35S pre-rRNA at sites A0, A1, and A2, leading to mature 18S rRNA. The sequence is that of ATP-dependent RNA helicase HAS1 (HAS1) from Lodderomyces elongisporus (strain ATCC 11503 / CBS 2605 / JCM 1781 / NBRC 1676 / NRRL YB-4239) (Yeast).